The sequence spans 261 residues: Small ribosomal subunit protein uS2 (261 aa).

This sequence belongs to the universal ribosomal protein uS2 family.

This is Small ribosomal subunit protein uS2 from Paracoccus denitrificans (strain Pd 1222).